The chain runs to 368 residues: Phospho-N-acetylmuramoyl-pentapeptide-transferase (368 aa).

A run of 9 helical transmembrane segments spans residues 30–50 (AAAI…IAYL), 72–92 (LPTM…FLWA), 99–119 (VWLV…DDYL), 135–155 (LIGQ…DPSM), 170–190 (LTIN…TAIS), 201–221 (GLAA…AYLA), 238–258 (GGEV…FLWF), 265–286 (IIMG…ALLI), and 345–365 (KIVI…LMTL).

The protein belongs to the glycosyltransferase 4 family. MraY subfamily. Mg(2+) is required as a cofactor.

It is found in the cell inner membrane. The catalysed reaction is UDP-N-acetyl-alpha-D-muramoyl-L-alanyl-gamma-D-glutamyl-meso-2,6-diaminopimeloyl-D-alanyl-D-alanine + di-trans,octa-cis-undecaprenyl phosphate = di-trans,octa-cis-undecaprenyl diphospho-N-acetyl-alpha-D-muramoyl-L-alanyl-D-glutamyl-meso-2,6-diaminopimeloyl-D-alanyl-D-alanine + UMP. It participates in cell wall biogenesis; peptidoglycan biosynthesis. Its function is as follows. Catalyzes the initial step of the lipid cycle reactions in the biosynthesis of the cell wall peptidoglycan: transfers peptidoglycan precursor phospho-MurNAc-pentapeptide from UDP-MurNAc-pentapeptide onto the lipid carrier undecaprenyl phosphate, yielding undecaprenyl-pyrophosphoryl-MurNAc-pentapeptide, known as lipid I. The protein is Phospho-N-acetylmuramoyl-pentapeptide-transferase of Chlorobium chlorochromatii (strain CaD3).